We begin with the raw amino-acid sequence, 1125 residues long: Angiopoietin-1 receptor (1125 aa).

The first 22 residues, 1–22 (MDSLAGLVLCGVSLLLSATVDG), serve as a signal peptide directing secretion. At 23-748 (AMDLILINSL…PADLGGRKML (726 aa)) the chain is on the extracellular side. Residues cysteine 44 and cysteine 102 are joined by a disulfide bond. The Ig-like C2-type 1 domain occupies 44-123 (CIASGWRPHE…RTMKMRQQAS (80 aa)). N-linked (GlcNAc...) asparagine glycosylation occurs at asparagine 158. 3 EGF-like domains span residues 210 to 252 (RCEA…RTCE), 254 to 299 (ACEP…LQCN), and 301 to 341 (ACQP…LQCE). Cystine bridges form between cysteine 211–cysteine 220, cysteine 224–cysteine 233, cysteine 227–cysteine 240, cysteine 242–cysteine 251, cysteine 255–cysteine 264, cysteine 268–cysteine 274, cysteine 280–cysteine 287, cysteine 289–cysteine 298, cysteine 302–cysteine 311, cysteine 315–cysteine 323, cysteine 317–cysteine 329, cysteine 331–cysteine 340, and cysteine 370–cysteine 424. Residues 350–440 (PKIEDLPDHI…GMVEKPFNIS (91 aa)) enclose the Ig-like C2-type 2 domain. Fibronectin type-III domains lie at 447–541 (PLNA…TASI), 545–637 (PPRG…TLSD), and 642–735 (QPEN…TLSE). The chain crosses the membrane as a helical span at residues 749–769 (LIAILGSAGMTCLTVLLAFLI). Over 770 to 1125 (MLQLKRANVQ…GIDCSAEEAA (356 aa)) the chain is Cytoplasmic. The Protein kinase domain maps to 825–1097 (IKFQDVIGEG…QILVSLNRML (273 aa)). Residues 831–839 (IGEGNFGQV) and lysine 856 each bind ATP. Tyrosine 861 carries the post-translational modification Phosphotyrosine; by autocatalysis. Catalysis depends on aspartate 965, which acts as the Proton acceptor. Phosphotyrosine; by autocatalysis is present on residues tyrosine 993, tyrosine 1103, and tyrosine 1109.

The protein belongs to the protein kinase superfamily. Tyr protein kinase family. Tie subfamily. Homodimer. Heterodimer with TIE1. Interacts with ANGPT1, ANGPT2 and ANGPT4. At cell-cell contacts in quiescent cells, forms a signaling complex composed of ANGPT1 plus TEK molecules from two adjoining cells. In the absence of endothelial cell-cell contacts, interaction with ANGPT1 mediates contacts with the extracellular matrix. Interacts (tyrosine phosphorylated) with TNIP2. Interacts (tyrosine phosphorylated) with SHC1 (via SH2 domain). Interacts with PTPRB; this promotes endothelial cell-cell adhesion. Interacts with DOK2, GRB2, GRB7, GRB14, PIK3R1 and PTPN11/SHP2. Colocalizes with DOK2 at contacts with the extracellular matrix in migrating cells. In terms of processing, proteolytic processing leads to the shedding of the extracellular domain (soluble TIE-2 alias sTIE-2). Autophosphorylated on tyrosine residues in response to ligand binding. Autophosphorylation occurs in trans, i.e. one subunit of the dimeric receptor phosphorylates tyrosine residues on the other subunit. Autophosphorylation occurs in a sequential manner, where Tyr-993 in the kinase activation loop is phosphorylated first, followed by autophosphorylation at Tyr-1109 and at additional tyrosine residues. ANGPT1-induced phosphorylation is impaired during hypoxia, due to increased expression of ANGPT2. Phosphorylation is important for interaction with GRB14, PIK3R1 and PTPN11. Phosphorylation at Tyr-1103 is important for interaction with GRB2 and GRB7. Phosphorylation at Tyr-1109 is important for interaction with DOK2 and for coupling to downstream signal transduction pathways in endothelial cells. Dephosphorylated by PTPRB. Post-translationally, ubiquitinated. The phosphorylated receptor is ubiquitinated and internalized, leading to its degradation. As to expression, specifically expressed in developing vascular endothelial cells.

The protein localises to the cell membrane. The protein resides in the cell junction. It localises to the focal adhesion. Its subcellular location is the cytoplasm. It is found in the cytoskeleton. The protein localises to the secreted. The catalysed reaction is L-tyrosyl-[protein] + ATP = O-phospho-L-tyrosyl-[protein] + ADP + H(+). With respect to regulation, angiopoietin binding leads to receptor dimerization and activation by autophosphorylation at Tyr-993 on the kinase activation loop. In terms of biological role, tyrosine-protein kinase that acts as a cell-surface receptor for ANGPT1, ANGPT2 and ANGPT4 and regulates angiogenesis, endothelial cell survival, proliferation, migration, adhesion and cell spreading, reorganization of the actin cytoskeleton, but also maintenance of vascular quiescence. Has anti-inflammatory effects by preventing the leakage of pro-inflammatory plasma proteins and leukocytes from blood vessels. Required for normal angiogenesis and heart development during embryogenesis. Required for post-natal hematopoiesis. After birth, activates or inhibits angiogenesis, depending on the context. Inhibits angiogenesis and promotes vascular stability in quiescent vessels, where endothelial cells have tight contacts. In quiescent vessels, ANGPT1 oligomers recruit TEK to cell-cell contacts, forming complexes with TEK molecules from adjoining cells, and this leads to preferential activation of phosphatidylinositol 3-kinase and the AKT1 signaling cascades. In migrating endothelial cells that lack cell-cell adhesions, ANGT1 recruits TEK to contacts with the extracellular matrix, leading to the formation of focal adhesion complexes, activation of PTK2/FAK and of the downstream kinases MAPK1/ERK2 and MAPK3/ERK1, and ultimately to the stimulation of sprouting angiogenesis. ANGPT1 signaling triggers receptor dimerization and autophosphorylation at specific tyrosine residues that then serve as binding sites for scaffold proteins and effectors. Signaling is modulated by ANGPT2 that has lower affinity for TEK, can promote TEK autophosphorylation in the absence of ANGPT1, but inhibits ANGPT1-mediated signaling by competing for the same binding site. Signaling is also modulated by formation of heterodimers with TIE1, and by proteolytic processing that gives rise to a soluble TEK extracellular domain. The soluble extracellular domain modulates signaling by functioning as decoy receptor for angiopoietins. TEK phosphorylates DOK2, GRB7, GRB14, PIK3R1, SHC1 and TIE1. In Bos taurus (Bovine), this protein is Angiopoietin-1 receptor (TEK).